The primary structure comprises 264 residues: Movement protein (264 aa).

Residues Arg-211–Tyr-264 are disordered. Residues Lys-237–Asp-247 show a composition bias toward basic and acidic residues.

This sequence belongs to the tobamovirus movement protein family. In terms of assembly, binds to host RBCS at the plasmodesmata; this interaction seems required for viral systemic movement. In resistant plants, interacts with host MBP2C at host microtubules; this interaction prevents virus cell to cell movement. In resistant plants, interacts with host resistance (R) protein (e.g. tomato ToMV resistance protein TM-2(2), AC Q71BG9) at the host plasma membrane; this interaction triggers host defense responses leading to programmed cell death.

The protein resides in the host cytoplasm. It localises to the host cytoskeleton. Its subcellular location is the host cell junction. The protein localises to the host plasmodesma. Transports viral genome to neighboring plant cells directly through plasmosdesmata, without any budding. The movement protein allows efficient cell to cell propagation, by bypassing the host cell wall barrier. Forms a ribonucleoprotein complex with viral RNA. Binds microtubules and modulates microtubule stability. Can bind double-stranded DNA. Triggers host hypersensitive defense reaction in incompatible plants harboring resistance (R) proteins. The sequence is that of Movement protein (MP) from Tomato mosaic virus (strain S-1) (ToMV).